The sequence spans 511 residues: D-alanine--D-alanyl carrier protein ligase (511 aa).

152–153 (TS) provides a ligand contact to ATP. A D-alanine-binding site is contributed by aspartate 199. 294–299 (NAYGPT) contacts ATP. Position 303 (valine 303) interacts with D-alanine. ATP is bound by residues aspartate 385, 397 to 400 (YGGR), and lysine 499. Lysine 499 contributes to the D-alanine binding site.

The protein belongs to the ATP-dependent AMP-binding enzyme family. DltA subfamily.

It localises to the cytoplasm. The catalysed reaction is holo-[D-alanyl-carrier protein] + D-alanine + ATP = D-alanyl-[D-alanyl-carrier protein] + AMP + diphosphate. It participates in cell wall biogenesis; lipoteichoic acid biosynthesis. Catalyzes the first step in the D-alanylation of lipoteichoic acid (LTA), the activation of D-alanine and its transfer onto the D-alanyl carrier protein (Dcp) DltC. In an ATP-dependent two-step reaction, forms a high energy D-alanyl-AMP intermediate, followed by transfer of the D-alanyl residue as a thiol ester to the phosphopantheinyl prosthetic group of the Dcp. D-alanylation of LTA plays an important role in modulating the properties of the cell wall in Gram-positive bacteria, influencing the net charge of the cell wall. In Streptococcus agalactiae serotype V (strain ATCC BAA-611 / 2603 V/R), this protein is D-alanine--D-alanyl carrier protein ligase.